Here is a 251-residue protein sequence, read N- to C-terminus: Flap endonuclease Xni (251 aa).

Residue D104 participates in Mg(2+) binding. A 5'-3' exonuclease domain is found at V160–L249. K(+) contacts are provided by L171, A172, P180, V182, and I185. Residues G184–S189 form an interaction with DNA region.

The protein belongs to the Xni family. It depends on Mg(2+) as a cofactor. K(+) serves as cofactor.

Its function is as follows. Has flap endonuclease activity. During DNA replication, flap endonucleases cleave the 5'-overhanging flap structure that is generated by displacement synthesis when DNA polymerase encounters the 5'-end of a downstream Okazaki fragment. The chain is Flap endonuclease Xni from Escherichia coli O139:H28 (strain E24377A / ETEC).